A 624-amino-acid chain; its full sequence is Probable Xaa-Pro aminopeptidase P (624 aa).

Mn(2+)-binding residues include Asp-414, Asp-425, Glu-530, and Glu-544.

It belongs to the peptidase M24B family. Mn(2+) is required as a cofactor.

The catalysed reaction is Release of any N-terminal amino acid, including proline, that is linked to proline, even from a dipeptide or tripeptide.. In terms of biological role, catalyzes the removal of a penultimate prolyl residue from the N-termini of peptides. This is Probable Xaa-Pro aminopeptidase P (AMPP) from Chaetomium globosum (strain ATCC 6205 / CBS 148.51 / DSM 1962 / NBRC 6347 / NRRL 1970) (Soil fungus).